The chain runs to 148 residues: 3-dehydroquinate dehydratase (148 aa).

Residue Y24 is the Proton acceptor of the active site. Positions 80, 86, and 93 each coordinate substrate. H106 functions as the Proton donor in the catalytic mechanism. Residues 107–108 (IS) and R117 each bind substrate.

This sequence belongs to the type-II 3-dehydroquinase family. As to quaternary structure, homododecamer.

It carries out the reaction 3-dehydroquinate = 3-dehydroshikimate + H2O. Its pathway is metabolic intermediate biosynthesis; chorismate biosynthesis; chorismate from D-erythrose 4-phosphate and phosphoenolpyruvate: step 3/7. Its function is as follows. Catalyzes a trans-dehydration via an enolate intermediate. The polypeptide is 3-dehydroquinate dehydratase (Acidovorax ebreus (strain TPSY) (Diaphorobacter sp. (strain TPSY))).